Reading from the N-terminus, the 214-residue chain is MSRLALTRADEPMTAARVGIGGPVGSGKTALVERLIPALQTRGIDIAVITNDLVTAEDAERVRRSGLIDPERVSAVEAGACPHTVIREDPTLNIEAADELERRFPGVELILLESGGDNLASTFSRDLTDFWMFVIDVAGGDDIPRKRGPGVIRADLLVINKVDLAPHVGVDLGRMQREATEVRGGRPVLLTNCRRGEGIEAIVDLLEREVLFRK.

A GTP-binding site is contributed by 22-29 (GPVGSGKT).

Belongs to the SIMIBI class G3E GTPase family. UreG subfamily. Homodimer. UreD, UreF and UreG form a complex that acts as a GTP-hydrolysis-dependent molecular chaperone, activating the urease apoprotein by helping to assemble the nickel containing metallocenter of UreC. The UreE protein probably delivers the nickel.

The protein resides in the cytoplasm. Facilitates the functional incorporation of the urease nickel metallocenter. This process requires GTP hydrolysis, probably effectuated by UreG. In Bradyrhizobium sp. (strain BTAi1 / ATCC BAA-1182), this protein is Urease accessory protein UreG 2.